The sequence spans 2602 residues: Filamin-B (2602 aa).

Residues 1–239 (MPVTEKDLAE…VMTYLSQFPK (239 aa)) are actin-binding. Calponin-homology (CH) domains lie at 16–122 (KIQQ…LHYS) and 139–242 (QTPK…KAKL). The residue at position 216 (Thr216) is a Phosphothreonine. A disordered region spans residues 244-267 (PGAPLKPKLNPKKARAYGRGIEPT). Filamin repeat units lie at residues 249-347 (KPKL…EVNV), 349-446 (KAQG…GVQI), 447-543 (GEAC…EVQV), 544-636 (GPEA…MAFI), 640-736 (TGDY…RVNI), 737-839 (GQGS…RVKV), 840-938 (DPSH…TVGV), 939-1034 (AAPL…TVEA), 1035-1127 (SLPP…KADI), 1128-1222 (EMPF…WVKV), 1223-1322 (EPAI…KVAV), 1323-1415 (TEGC…RVPS), 1416-1511 (KDVV…KVKV), 1512-1608 (LPTY…RIRA), and 1609-1704 (TQTG…TVMA). The residue at position 519 (Thr519) is a Phosphothreonine. Lys681 is modified (N6-acetyllysine). Ser730 bears the Phosphoserine mark. Basic and acidic residues predominate over residues 837 to 850 (VKVDPSHDASKVKA). The tract at residues 837–862 (VKVDPSHDASKVKAEGPGLSKAGVEN) is disordered. Phosphoserine is present on residues Ser886, Ser932, Ser983, and Ser1028. Thr1307 is subject to Phosphothreonine. Ser1316 carries the post-translational modification Phosphoserine. Ser1433, Ser1505, and Ser1602 each carry phosphoserine. The tract at residues 1705 to 1728 (TDGEVTAMEEAPVNACPPGFRPWV) is hinge 1. Filamin repeat units lie at residues 1729–1813 (TEEA…SPLQ), 1816–1908 (VNYP…TAKI), 1919–1994 (KLGS…SIMV), 1997–2089 (SEIG…TVKI), 2091–2185 (GEGR…QFTV), 2188–2280 (LGEG…LVPV), 2282–2375 (APSD…KVRV), and 2379–2471 (GQAG…KAKV). Residue Lys1780 is modified to N6-acetyllysine. Phosphoserine occurs at positions 2083 and 2113. Residues Ser2369 and Ser2465 each carry the phosphoserine modification. Residue Lys2468 forms a Glycyl lysine isopeptide (Lys-Gly) (interchain with G-Cter in ISG15) linkage. Residues 2472–2506 (TGQRLVSPGSANETSSILVESVTRSSTETCYSAIP) are hinge 2. Positions 2472–2602 (TGQRLVSPGS…PGSPFHVTVP (131 aa)) are self-association site, tail. Ser2478, Ser2481, and Ser2492 each carry phosphoserine. One copy of the Filamin 24 repeat lies at 2507–2601 (KSSSDASKVT…IPGSPFHVTV (95 aa)). N6-succinyllysine occurs at positions 2518 and 2524. Lys2576 is subject to N6-acetyllysine.

Belongs to the filamin family. In terms of assembly, homodimer. Interacts with FLNA, FLNC, INPPL1, ITGB1A, ITGB1D, ITGB3, ITGB6, MYOT, MYOZ1, PSEN1 and PSEN2. Interacts with MICALL2. Interacts with RFLNA and RFLNB. Interacts with ASB2 isoform 1; the interaction targets FLNB for proteasomal degradation. In terms of processing, ISGylation prevents ability to interact with the upstream activators of the JNK cascade and inhibits IFNA-induced JNK signaling. Ubiquitination by a SCF-like complex containing ASB2 isoform 1 leads to proteasomal degradation which promotes muscle differentiation. Expressed in hippocampus, cortex, cerebellar Purkinje cells and granule cell layers.

It is found in the cytoplasm. The protein resides in the cell cortex. The protein localises to the cytoskeleton. Its subcellular location is the stress fiber. It localises to the myofibril. It is found in the sarcomere. The protein resides in the z line. In terms of biological role, connects cell membrane constituents to the actin cytoskeleton. May promote orthogonal branching of actin filaments and links actin filaments to membrane glycoproteins. Anchors various transmembrane proteins to the actin cytoskeleton. The chain is Filamin-B (Flnb) from Mus musculus (Mouse).